Consider the following 381-residue polypeptide: Tryptophan--tRNA ligase (381 aa).

The 'HIGH' region motif lies at 82–90 (PSLGMHIGH). The 'KMSKS' region signature appears at 254–258 (KMSSS).

It belongs to the class-I aminoacyl-tRNA synthetase family.

It is found in the cytoplasm. It carries out the reaction tRNA(Trp) + L-tryptophan + ATP = L-tryptophyl-tRNA(Trp) + AMP + diphosphate + H(+). This is Tryptophan--tRNA ligase from Sulfolobus acidocaldarius (strain ATCC 33909 / DSM 639 / JCM 8929 / NBRC 15157 / NCIMB 11770).